A 91-amino-acid chain; its full sequence is UPF0250 protein PSEEN4821 (91 aa).

Belongs to the UPF0250 family.

The polypeptide is UPF0250 protein PSEEN4821 (Pseudomonas entomophila (strain L48)).